We begin with the raw amino-acid sequence, 432 residues long: 3-phosphoshikimate 1-carboxyvinyltransferase (432 aa).

The 3-phosphoshikimate site is built by Lys-23, Ser-24, and Arg-28. A phosphoenolpyruvate-binding site is contributed by Lys-23. Residues Gly-95 and Arg-123 each coordinate phosphoenolpyruvate. 3-phosphoshikimate contacts are provided by Ser-167, Gln-169, Asp-317, and Lys-344. Residue Gln-169 coordinates phosphoenolpyruvate. The Proton acceptor role is filled by Asp-317. Phosphoenolpyruvate is bound by residues Arg-348 and Arg-390.

Belongs to the EPSP synthase family. Monomer.

Its subcellular location is the cytoplasm. The enzyme catalyses 3-phosphoshikimate + phosphoenolpyruvate = 5-O-(1-carboxyvinyl)-3-phosphoshikimate + phosphate. It functions in the pathway metabolic intermediate biosynthesis; chorismate biosynthesis; chorismate from D-erythrose 4-phosphate and phosphoenolpyruvate: step 6/7. Functionally, catalyzes the transfer of the enolpyruvyl moiety of phosphoenolpyruvate (PEP) to the 5-hydroxyl of shikimate-3-phosphate (S3P) to produce enolpyruvyl shikimate-3-phosphate and inorganic phosphate. The protein is 3-phosphoshikimate 1-carboxyvinyltransferase of Staphylococcus aureus (strain bovine RF122 / ET3-1).